A 444-amino-acid chain; its full sequence is Tubulin beta chain (444 aa).

The short motif at 1–4 (MREI) is the MREI motif element. Residue Gln11 coordinates GTP. Position 40 is a phosphoserine (Ser40). A Phosphothreonine modification is found at Thr55. Lys58 is subject to N6-acetyllysine; alternate. N6-succinyllysine; alternate is present on Lys58. A Glycyl lysine isopeptide (Lys-Gly) (interchain with G-Cter in ubiquitin); alternate cross-link involves residue Lys58. 5 residues coordinate GTP: Glu69, Ser138, Gly142, Thr143, and Gly144. Glu69 contributes to the Mg(2+) binding site. Ser172 carries the phosphoserine; by CDK1 modification. The GTP site is built by Asn204 and Asn226. Thr285 and Thr290 each carry phosphothreonine. Arg318 bears the Omega-N-methylarginine mark. A Glycyl lysine isopeptide (Lys-Gly) (interchain with G-Cter in ubiquitin) cross-link involves residue Lys324. The disordered stretch occupies residues 423 to 444 (QQYQDATAEEEEDFGEEAEEEA). Residues 429 to 444 (TAEEEEDFGEEAEEEA) show a composition bias toward acidic residues. 5-glutamyl polyglutamate occurs at positions 434, 438, 439, and 441. Residues Glu438, Glu439, Glu441, Glu442, and Glu443 each carry the 5-glutamyl glycine modification.

It belongs to the tubulin family. As to quaternary structure, heterodimer of alpha and beta chains. A typical microtubule is a hollow water-filled tube with an outer diameter of 25 nm and an inner diameter of 15 nM. Alpha-beta heterodimers associate head-to-tail to form protofilaments running lengthwise along the microtubule wall with the beta-tubulin subunit facing the microtubule plus end conferring a structural polarity. Microtubules usually have 13 protofilaments but different protofilament numbers can be found in some organisms and specialized cells. Interacts with CIMAP3. Interacts with DIAPH1. Interacts with MX1. May interact with RNABP10. Interacts with CFAP157. Nascent tubulin polypeptide interacts (via beta-tubulin MREI motif) with TTC5/STRAP; this interaction results in tubulin mRNA-targeted degradation. Mg(2+) is required as a cofactor. Post-translationally, some glutamate residues at the C-terminus are polyglycylated, resulting in polyglycine chains on the gamma-carboxyl group. Glycylation is mainly limited to tubulin incorporated into axonemes (cilia and flagella) whereas glutamylation is prevalent in neuronal cells, centrioles, axonemes, and the mitotic spindle. Both modifications can coexist on the same protein on adjacent residues, and lowering polyglycylation levels increases polyglutamylation, and reciprocally. Cilia and flagella glycylation is required for their stability and maintenance. Flagella glycylation controls sperm motility. Some glutamate residues at the C-terminus are polyglutamylated, resulting in polyglutamate chains on the gamma-carboxyl group. Polyglutamylation plays a key role in microtubule severing by spastin (SPAST). SPAST preferentially recognizes and acts on microtubules decorated with short polyglutamate tails: severing activity by SPAST increases as the number of glutamates per tubulin rises from one to eight, but decreases beyond this glutamylation threshold. Glutamylation is also involved in cilia motility. In terms of processing, phosphorylated on Ser-172 by CDK1 during the cell cycle, from metaphase to telophase, but not in interphase. This phosphorylation inhibits tubulin incorporation into microtubules.

It localises to the cytoplasm. The protein resides in the cytoskeleton. Tubulin is the major constituent of microtubules, a cylinder consisting of laterally associated linear protofilaments composed of alpha- and beta-tubulin heterodimers. Microtubules grow by the addition of GTP-tubulin dimers to the microtubule end, where a stabilizing cap forms. Below the cap, tubulin dimers are in GDP-bound state, owing to GTPase activity of alpha-tubulin. This is Tubulin beta chain (TUBB) from Sus scrofa (Pig).